The following is a 726-amino-acid chain: Transcription factor 12 (726 aa).

Disordered regions lie at residues 27-75 (SPPV…SRGF), 89-223 (LVSH…TFFD), 243-267 (YGGM…HSHD), 289-309 (SSFH…HTPP), 345-367 (PDHT…SPLA), 380-409 (TASG…YENS), 501-532 (MGSV…SSEL), 558-624 (VENQ…ERRM), and 694-726 (EEEK…MGHL). Residues 29–47 (PVNSGKNRPTTLGSSQFTA) are compositionally biased toward polar residues. The segment covering 55–74 (SQASWASGGQSSPSFESSRG) has biased composition (low complexity). Composition is skewed to polar residues over residues 145–157 (PGKS…SYTG), 249–263 (GSSS…YSNL), and 291–309 (FHRS…HTPP). Positions 348-359 (TSSSFPSNPSTP) are enriched in low complexity. Polar residues-rich tracts occupy residues 389 to 409 (GTTQ…YENS) and 510 to 532 (GSLN…SSEL). Residues 559–575 (ENQDKDDMHDSHASDDL) are compositionally biased toward basic and acidic residues. Residues 592 to 603 (SSRPSCELSCSS) are compositionally biased toward low complexity. The span at 612 to 624 (PEQKAERERERRM) shows a compositional bias: basic and acidic residues. Positions 621 to 674 (ERRMANNARERLRVRDINEAFKELGRMCQLHLKSEKPQTKLLILHQAVAVILSL) constitute a bHLH domain. Residues 676-699 (QQVRERNLNPKAACLKRREEEKVS) form a class A specific domain region. Residues 717–726 (TDTSNPMGHL) are compositionally biased toward polar residues.

In terms of assembly, efficient DNA binding requires dimerization with another bHLH protein.

It localises to the nucleus. Transcriptional regulator. Involved in the initiation of neuronal differentiation. Activates transcription by binding to the E box (5'-CANNTG-3'). May be involved in the functional network that regulates the development of the GnRH axis. The polypeptide is Transcription factor 12 (tcf12) (Danio rerio (Zebrafish)).